The following is a 473-amino-acid chain: Putative malate dehydrogenase 1B (473 aa).

The protein belongs to the LDH/MDH superfamily. MDH type 2 family.

The sequence is that of Putative malate dehydrogenase 1B (MDH1B) from Bos taurus (Bovine).